The chain runs to 181 residues: MQTSAQKVIQDLTNRVQAEKEELEQLERERDLWKYNAQMNDKEALRGNERKKNIMKKGGPLCYFCNKNHVPSLCRTYPDGISRQKSLENQGKCIKCLKIGHQNGDNFCEKHHIVCRTCQQSHVKAVCPILYPKKDTPPKILRARRRSLIRAQKKKDFQEPENKHEQLTSTKAPCQENWSDF.

Positions 151–181 (AQKKKDFQEPENKHEQLTSTKAPCQENWSDF) are disordered. Residues 154-166 (KKDFQEPENKHEQ) are compositionally biased toward basic and acidic residues. Residues 167 to 181 (LTSTKAPCQENWSDF) show a composition bias toward polar residues.

This is an uncharacterized protein from Caenorhabditis elegans.